The sequence spans 340 residues: Proline-rich transmembrane protein 2 (340 aa).

Residues 1–261 (MAASSSEISE…AGPGVEGGEG (261 aa)) are disordered. Over 1-268 (MAASSSEISE…GEGTQKPRDY (268 aa)) the chain is Cytoplasmic. Residues 9–18 (SEMKGVEESP) are compositionally biased toward basic and acidic residues. The residue at position 28 (Ser-28) is a Phosphoserine. A Phosphothreonine modification is found at Thr-74. 2 stretches are compositionally biased toward pro residues: residues 131-155 (PPEPAPEPAPQPDPRPDSQPTPKPA) and 197-207 (APEPHSPPSKK). Residue Ser-238 is modified to Phosphoserine. Position 240 is an omega-N-methylarginine (Arg-240). 2 positions are modified to phosphoserine: Ser-248 and Ser-249. Residues 269–289 (IILAILSCFCPMWPVNIVAFA) constitute an intramembrane region (helical). At 290-317 (YAVMSRNSLQQGDVDGAQRLGRVAKLLS) the chain is on the cytoplasmic side. The helical transmembrane segment at 318 to 338 (IVALVGGVLIIIASCVINLGV) threads the bilayer. Over 339–340 (YK) the chain is Extracellular.

Belongs to the CD225/Dispanin family. As to quaternary structure, component of the outer core of AMPAR complex. AMPAR complex consists of an inner core made of 4 pore-forming GluA/GRIA proteins (GRIA1, GRIA2, GRIA3 and GRIA4) and 4 major auxiliary subunits arranged in a twofold symmetry. One of the two pairs of distinct binding sites is occupied either by CNIH2, CNIH3 or CACNG2, CACNG3. The other harbors CACNG2, CACNG3, CACNG4, CACNG8 or GSG1L. This inner core of AMPAR complex is complemented by outer core constituents binding directly to the GluA/GRIA proteins at sites distinct from the interaction sites of the inner core constituents. Outer core constituents include at least PRRT1, PRRT2, CKAMP44/SHISA9, FRRS1L and NRN1. The proteins of the inner and outer core serve as a platform for other, more peripherally associated AMPAR constituents. Alone or in combination, these auxiliary subunits control the gating and pharmacology of the AMPAR complex and profoundly impact their biogenesis and protein processing. Interacts with intersectin 1/ITSN1. Interacts with SNARE complex components, including SNAP25, STX1A, SYT1 and SYT2; this interaction may inhibit SNARE complex formation.

The protein resides in the cell membrane. Its subcellular location is the presynaptic cell membrane. It localises to the synapse. It is found in the cell projection. The protein localises to the axon. The protein resides in the cytoplasmic vesicle. Its subcellular location is the secretory vesicle. It localises to the synaptic vesicle membrane. It is found in the postsynaptic density membrane. The protein localises to the dendritic spine. Its function is as follows. As a component of the outer core of AMPAR complex, may be involved in synaptic transmission in the central nervous system. In hippocampal neurons, in presynaptic terminals, plays an important role in the final steps of neurotransmitter release, possibly by regulating Ca(2+)-sensing. In the cerebellum, may inhibit SNARE complex formation and down-regulate short-term facilitation. The protein is Proline-rich transmembrane protein 2 (PRRT2) of Homo sapiens (Human).